The sequence spans 185 residues: Ribosome-recycling factor (185 aa).

Belongs to the RRF family.

The protein localises to the cytoplasm. In terms of biological role, responsible for the release of ribosomes from messenger RNA at the termination of protein biosynthesis. May increase the efficiency of translation by recycling ribosomes from one round of translation to another. The sequence is that of Ribosome-recycling factor from Campylobacter concisus (strain 13826).